The chain runs to 313 residues: MATRKLKAAIIGSGNIGTDLMIKILRHGKHLEMGAMVGIDPASDGLARAARMGVATTHEGVEGLISLPNFADIDVVFDATSAGAHVKNDARLREVKPGIRMIDLTPAAIGPYCVPVVNLDDRLDALNVNMVTCGGQATIPMVAAVSRVAKVHYAEIVASISSKSAGPGTRANIDEFTETTSKAIEVIGGAAKGKAIIVLNPAEPPLIMRDTVYVLSAAANRAEVEASIEEMAAAVQQYVPGYRLKQKVQFDEIPASAPLNIPGLGKFSGLKTSVFLEVEGAAHYLPAYAGNLDIMTSAALATAERMAQAALTA.

13 to 16 provides a ligand contact to NAD(+); sequence SGNI. Catalysis depends on C133, which acts as the Acyl-thioester intermediate. Residues 164 to 172 and N291 each bind NAD(+); that span reads SAGPGTRAN.

It belongs to the acetaldehyde dehydrogenase family.

The catalysed reaction is acetaldehyde + NAD(+) + CoA = acetyl-CoA + NADH + H(+). The polypeptide is Acetaldehyde dehydrogenase (Cupriavidus pinatubonensis (strain JMP 134 / LMG 1197) (Cupriavidus necator (strain JMP 134))).